The chain runs to 488 residues: Glutamyl-tRNA(Gln) amidotransferase subunit A (488 aa).

Catalysis depends on charge relay system residues K78 and S153. S177 functions as the Acyl-ester intermediate in the catalytic mechanism.

The protein belongs to the amidase family. GatA subfamily. As to quaternary structure, heterotrimer of A, B and C subunits.

It catalyses the reaction L-glutamyl-tRNA(Gln) + L-glutamine + ATP + H2O = L-glutaminyl-tRNA(Gln) + L-glutamate + ADP + phosphate + H(+). Functionally, allows the formation of correctly charged Gln-tRNA(Gln) through the transamidation of misacylated Glu-tRNA(Gln) in organisms which lack glutaminyl-tRNA synthetase. The reaction takes place in the presence of glutamine and ATP through an activated gamma-phospho-Glu-tRNA(Gln). The protein is Glutamyl-tRNA(Gln) amidotransferase subunit A of Caldanaerobacter subterraneus subsp. tengcongensis (strain DSM 15242 / JCM 11007 / NBRC 100824 / MB4) (Thermoanaerobacter tengcongensis).